Reading from the N-terminus, the 240-residue chain is Ubiquinone biosynthesis O-methyltransferase (240 aa).

S-adenosyl-L-methionine-binding residues include R44, G64, D85, and M129.

The protein belongs to the methyltransferase superfamily. UbiG/COQ3 family.

The catalysed reaction is a 3-demethylubiquinol + S-adenosyl-L-methionine = a ubiquinol + S-adenosyl-L-homocysteine + H(+). The enzyme catalyses a 3-(all-trans-polyprenyl)benzene-1,2-diol + S-adenosyl-L-methionine = a 2-methoxy-6-(all-trans-polyprenyl)phenol + S-adenosyl-L-homocysteine + H(+). It participates in cofactor biosynthesis; ubiquinone biosynthesis. Its function is as follows. O-methyltransferase that catalyzes the 2 O-methylation steps in the ubiquinone biosynthetic pathway. The chain is Ubiquinone biosynthesis O-methyltransferase from Photorhabdus laumondii subsp. laumondii (strain DSM 15139 / CIP 105565 / TT01) (Photorhabdus luminescens subsp. laumondii).